Here is a 232-residue protein sequence, read N- to C-terminus: Ribonuclease 3 (232 aa).

The region spanning 6-133 is the RNase III domain; sequence FNDIENRLGV…VIAAVYLDKG (128 aa). Residue Glu46 coordinates Mg(2+). Asp50 is an active-site residue. Mg(2+) is bound by residues Asp119 and Glu122. Glu122 is an active-site residue. The 70-residue stretch at 160-229 folds into the DRBM domain; sequence DFKTKLQELL…AKEALKRLEK (70 aa).

It belongs to the ribonuclease III family. As to quaternary structure, homodimer. Requires Mg(2+) as cofactor.

It localises to the cytoplasm. It carries out the reaction Endonucleolytic cleavage to 5'-phosphomonoester.. Functionally, digests double-stranded RNA. Involved in the processing of primary rRNA transcript to yield the immediate precursors to the large and small rRNAs (23S and 16S). Processes some mRNAs, and tRNAs when they are encoded in the rRNA operon. Processes pre-crRNA and tracrRNA of type II CRISPR loci if present in the organism. The sequence is that of Ribonuclease 3 from Clostridium botulinum (strain Eklund 17B / Type B).